A 200-amino-acid chain; its full sequence is LexA repressor (200 aa).

The H-T-H motif DNA-binding region spans 28–48 (RAEIARILGFKSANAAEEHIK). Catalysis depends on for autocatalytic cleavage activity residues Ser118 and Lys155.

This sequence belongs to the peptidase S24 family. Homodimer.

It carries out the reaction Hydrolysis of Ala-|-Gly bond in repressor LexA.. In terms of biological role, represses a number of genes involved in the response to DNA damage (SOS response), including recA and lexA. In the presence of single-stranded DNA, RecA interacts with LexA causing an autocatalytic cleavage which disrupts the DNA-binding part of LexA, leading to derepression of the SOS regulon and eventually DNA repair. This Cellvibrio japonicus (strain Ueda107) (Pseudomonas fluorescens subsp. cellulosa) protein is LexA repressor.